Here is an 81-residue protein sequence, read N- to C-terminus: MRKGVHPKNNLVVFKDGSNGAMFLTRSTLNSKETIKYIDGKEYPLITVEITSKSHPFYTGQQKFVDAAGRIDKFNKRYKKS.

The protein belongs to the bacterial ribosomal protein bL31 family. Type B subfamily. As to quaternary structure, part of the 50S ribosomal subunit.

The protein is Large ribosomal subunit protein bL31B of Borreliella afzelii (strain PKo) (Borrelia afzelii).